The following is a 344-amino-acid chain: Beta-1,4-galactosyltransferase 4 (344 aa).

Residues 1–12 (MGFNLTFHLSYK) are Cytoplasmic-facing. Residues 13–38 (FRLLLLLTLCLTVVGWATSNYFVGAI) traverse the membrane as a helical; Signal-anchor for type II membrane protein segment. At 39 to 344 (QEIPKAKEFM…NITVDFWFGA (306 aa)) the chain is on the lumenal side. Cys-77 and Cys-118 are disulfide-bonded. Residues 129-133 (PHRNR), 168-170 (FNR), and 195-196 (VD) contribute to the UDP-alpha-D-galactose site. A disulfide bridge connects residues Cys-189 and Cys-208. Asp-196 is a binding site for Mn(2+). A glycan (N-linked (GlcNAc...) asparagine) is linked at Asn-220. UDP-alpha-D-galactose-binding residues include Tyr-224 and Trp-256. 258 to 261 (GEDD) is a binding site for N-acetyl-D-glucosamine. Residue His-289 coordinates Mn(2+). 289–291 (HTR) contributes to the UDP-alpha-D-galactose binding site. Arg-301 is an N-acetyl-D-glucosamine binding site. A glycan (N-linked (GlcNAc...) asparagine) is linked at Asn-335.

This sequence belongs to the glycosyltransferase 7 family. In terms of assembly, interacts with SLC35A2 (isoform 2; UGT1). It depends on Mn(2+) as a cofactor. In terms of processing, N-glycosylated. Highest expression is observed in placenta, pancreas, kidney and heart. Expressed in corneal epithelial cells.

It localises to the golgi apparatus membrane. Its subcellular location is the secreted. The enzyme catalyses N-acetyl-D-glucosamine + UDP-alpha-D-galactose = beta-D-galactosyl-(1-&gt;4)-N-acetyl-D-glucosamine + UDP + H(+). The catalysed reaction is a beta-D-GlcNAc-(1-&gt;3)-beta-D-Gal-(1-&gt;4)-beta-D-Glc-(1&lt;-&gt;1)-Cer(d18:1(4E)) + UDP-alpha-D-galactose = a neolactoside nLc4Cer(d18:1(4E)) + UDP + H(+). It catalyses the reaction 3-O-{beta-D-galactosyl-(1-&gt;3)-[6-O-sulfo-N-acetyl-beta-D-glucosaminyl-(1-&gt;6)]-N-acetyl-alpha-D-galactosaminyl}-L-seryl-[protein] + UDP-alpha-D-galactose = 3-O-{beta-D-galactosyl-(1-&gt;3)-[beta-D-galactosyl-(1-&gt;4)-6-O-sulfo-N-acetyl-beta-D-glucosaminyl-(1-&gt;6)]-N-acetyl-alpha-D-galactosaminyl}-L-seryl-[protein] + UDP + H(+). It carries out the reaction 3-O-{beta-D-galactosyl-(1-&gt;3)-[6-O-sulfo-N-acetyl-beta-D-glucosaminyl-(1-&gt;6)]-N-acetyl-alpha-D-galactosaminyl}-L-threonyl-[protein] + UDP-alpha-D-galactose = 3-O-{beta-D-galactosyl-(1-&gt;3)-[beta-D-galactosyl-(1-&gt;4)-6-O-sulfo-N-acetyl-beta-D-glucosaminyl-(1-&gt;6)]-N-acetyl-alpha-D-galactosaminyl}-L-threonyl-[protein] + UDP + H(+). The protein operates within protein modification; protein glycosylation. It participates in glycolipid biosynthesis. Up-regulated by LALBA. Galactose (Gal) transferase involved in the synthesis of terminal N-acetyllactosamine (LacNac) unit present on glycan chains of glycoproteins and glycosphingolipids. Catalyzes the transfer of Gal residue via a beta1-&gt;4 linkage from UDP-Gal to the non-reducing terminal N-acetyl glucosamine 6-O-sulfate (6-O-sulfoGlcNAc) in the linearly growing chain of both N- and O-linked keratan sulfate proteoglycans. Cooperates with B3GNT7 N-acetyl glucosamine transferase and CHST6 and CHST1 sulfotransferases to construct and elongate mono- and disulfated disaccharide units [-&gt;3Galbeta1-&gt;4(6-sulfoGlcNAcbeta)1-&gt;] and [-&gt;3(6-sulfoGalbeta)1-&gt;4(6-sulfoGlcNAcbeta)1-&gt;] within keratan sulfate polymer. Transfers Gal residue via a beta1-&gt;4 linkage to terminal 6-O-sulfoGlcNAc within the LacNac unit of core 2 O-glycans forming 6-sulfo-sialyl-Lewis X (sLex). May contribute to the generation of sLex epitope on mucin-type glycoproteins that serve as ligands for SELL/L-selectin, a major regulator of leukocyte migration. In the biosynthesis pathway of neolacto-series glycosphingolipids, transfers Gal residue via a beta1-&gt;4 linkage to terminal GlcNAc of a lactotriaosylceramide (Lc3Cer) acceptor to form a neolactotetraosylceramide. This is Beta-1,4-galactosyltransferase 4 from Homo sapiens (Human).